The primary structure comprises 332 residues: Malate dehydrogenase (332 aa).

NAD(+)-binding positions include 16-17 (QI), Asp-43, and Gly-90. Arg-99 contacts oxaloacetate. Gln-113 and Asn-132 together coordinate NAD(+). Oxaloacetate-binding residues include Asn-132, Arg-163, His-188, and Ser-243. Residue His-188 is the Proton acceptor of the active site.

This sequence belongs to the LDH/MDH superfamily. MDH type 2 family. In terms of assembly, homodimer.

Its subcellular location is the cytoplasm. It catalyses the reaction (S)-malate + NAD(+) = oxaloacetate + NADH + H(+). In terms of biological role, catalyzes the reduction of the carbonyl group of oxalacetic acid. No activity with pulegone. The chain is Malate dehydrogenase (MD1) from Nicotiana tabacum (Common tobacco).